The chain runs to 182 residues: Ribosome-recycling factor (182 aa).

It belongs to the RRF family.

The protein localises to the cytoplasm. Its function is as follows. Responsible for the release of ribosomes from messenger RNA at the termination of protein biosynthesis. May increase the efficiency of translation by recycling ribosomes from one round of translation to another. This Mycoplasma capricolum subsp. capricolum (strain California kid / ATCC 27343 / NCTC 10154) protein is Ribosome-recycling factor.